A 321-amino-acid polypeptide reads, in one-letter code: Sialic acid-binding periplasmic protein SiaP (321 aa).

A signal peptide spans 1–22 (MKTINKITIAILTLSAAASVNA).

Belongs to the bacterial solute-binding protein 7 family. The complex comprises the extracytoplasmic solute receptor protein SiaP, and the two transmembrane proteins SiaQ and SiaM.

The protein resides in the periplasm. In terms of biological role, part of the tripartite ATP-independent periplasmic (TRAP) transport system SiaPQM that catalyzes unidirectional Na(+)-dependent sialic acid uptake. Binds the common sialic acid N-acetylneuraminic acid (Neu5Ac) with a high affinity. This is Sialic acid-binding periplasmic protein SiaP from Vibrio cholerae serotype O1 (strain ATCC 39315 / El Tor Inaba N16961).